The primary structure comprises 487 residues: GTPase Der (487 aa).

The interval 1–20 (MAKAVRKSNSEETVPIKAPR) is disordered. EngA-type G domains are found at residues 28 to 197 (PVVS…SSKP) and 225 to 401 (FRLA…SRSR). Residues 34–41 (GRQNVGKS), 83–87 (DTPGL), 149–152 (NKAD), 231–238 (GKPNSGKS), 278–282 (DTAGI), and 343–346 (NKWD) each bind GTP. The KH-like domain maps to 402–486 (RKVSTSELNK…PVRLEFRSDR (85 aa)).

The protein belongs to the TRAFAC class TrmE-Era-EngA-EngB-Septin-like GTPase superfamily. EngA (Der) GTPase family. In terms of assembly, associates with the 50S ribosomal subunit.

In terms of biological role, GTPase that plays an essential role in the late steps of ribosome biogenesis. The chain is GTPase Der from Leptospira borgpetersenii serovar Hardjo-bovis (strain L550).